Reading from the N-terminus, the 204-residue chain is Bombinin-like peptides 1 (204 aa).

The segment at residues 1–16 is a signal peptide (or 18); the sequence is MNFKYIVAVSILIASA. 2 positions are modified to asparagine amide: asparagine 70 and asparagine 133.

It belongs to the bombinin family. As to expression, expressed by the skin glands.

Its subcellular location is the secreted. Has antimicrobial activity, but no hemolytic activity. Preference on killing Gram-negative non-enteric bacteria. The polypeptide is Bombinin-like peptides 1 (Bombina orientalis (Oriental fire-bellied toad)).